The sequence spans 264 residues: Low molecular mass lipoprotein PBMHPC-23 (264 aa).

Residues 1-23 (MKFLVVFAVVRACVTPACAEMSA) form the signal peptide.

It belongs to the 30 kDa lipoprotein family.

The protein resides in the secreted. In Bombyx mori (Silk moth), this protein is Low molecular mass lipoprotein PBMHPC-23.